Here is a 676-residue protein sequence, read N- to C-terminus: Hypermethylated in cancer 1 protein (676 aa).

A disordered region spans residues 1–27 (APGARPAASRERGHKSREERCGERGAA). Basic and acidic residues predominate over residues 8–23 (ASRERGHKSREERCGE). Residues 63-126 (CDVIIVVQNA…IYTGRLGECE (64 aa)) enclose the BTB domain. Residues 241-245 (GLDLS) form a binding to CtBP region. 2 disordered regions span residues 264–326 (PAEP…LPRG) and 342–405 (GPYL…DRYC). 2 stretches are compositionally biased toward basic and acidic residues: residues 266 to 278 (EPRE…RHDS) and 351 to 361 (EKELEREEKAE). The span at 384–398 (STSEETGSSEGPSPG) shows a compositional bias: low complexity. 5 consecutive C2H2-type zinc fingers follow at residues 420-447 (YVCI…EEEL), 474-501 (YRCS…LTRP), 502-529 (YPCT…GLKP), 530-557 (FACD…GEKP), and 558-585 (YECQ…AGPD).

It belongs to the krueppel C2H2-type zinc-finger protein family. Hic subfamily. As to quaternary structure, interacts with CtBP. As to expression, isoform 1 is highly expressed in kidney and lung. Expression of isoform 2 is higher in the lens, retina and stomach, and extremely low in heart, muscle, kidney and lung. Isoform 3 is weakly expressed in heart, kidney and lens.

The protein resides in the nucleus. Binds specifically to the gamma F-1-binding motif of the gamma F-crystallin promoter. May have a regulatory role in sclerotome specification and/or differentiation. Isoform 2 functions as a transcriptional repressor in lens cells. The sequence is that of Hypermethylated in cancer 1 protein (HIC1) from Gallus gallus (Chicken).